The primary structure comprises 121 residues: Putative iron-sulfur cluster insertion protein ErpA (121 aa).

Iron-sulfur cluster contacts are provided by cysteine 49, cysteine 113, and cysteine 115.

It belongs to the HesB/IscA family. Homodimer. Iron-sulfur cluster serves as cofactor.

Its function is as follows. Required for insertion of 4Fe-4S clusters. The chain is Putative iron-sulfur cluster insertion protein ErpA from Nitrosomonas eutropha (strain DSM 101675 / C91 / Nm57).